A 160-amino-acid chain; its full sequence is Large ribosomal subunit protein eL21B (160 aa).

Residue Lys32 forms a Glycyl lysine isopeptide (Lys-Gly) (interchain with G-Cter in ubiquitin) linkage.

It belongs to the eukaryotic ribosomal protein eL21 family. In terms of assembly, component of the large ribosomal subunit (LSU). Mature yeast ribosomes consist of a small (40S) and a large (60S) subunit. The 40S small subunit contains 1 molecule of ribosomal RNA (18S rRNA) and 33 different proteins (encoded by 57 genes). The large 60S subunit contains 3 rRNA molecules (25S, 5.8S and 5S rRNA) and 46 different proteins (encoded by 81 genes).

The protein resides in the cytoplasm. Its function is as follows. Component of the ribosome, a large ribonucleoprotein complex responsible for the synthesis of proteins in the cell. The small ribosomal subunit (SSU) binds messenger RNAs (mRNAs) and translates the encoded message by selecting cognate aminoacyl-transfer RNA (tRNA) molecules. The large subunit (LSU) contains the ribosomal catalytic site termed the peptidyl transferase center (PTC), which catalyzes the formation of peptide bonds, thereby polymerizing the amino acids delivered by tRNAs into a polypeptide chain. The nascent polypeptides leave the ribosome through a tunnel in the LSU and interact with protein factors that function in enzymatic processing, targeting, and the membrane insertion of nascent chains at the exit of the ribosomal tunnel. The protein is Large ribosomal subunit protein eL21B of Saccharomyces cerevisiae (strain ATCC 204508 / S288c) (Baker's yeast).